The following is a 412-amino-acid chain: Protein trichome birefringence-like 13 (412 aa).

The chain crosses the membrane as a helical; Signal-anchor for type II membrane protein span at residues 9-29; sequence PSLFPLLSLLCFISIFLLLSL. Residues 137–139 carry the GDS motif motif; the sequence is GDS. The short motif at 385 to 399 is the DCXHWCLPGXXDXWN motif element; sequence DCMHWCLPGLTDTWN.

It belongs to the PC-esterase family. TBL subfamily.

It is found in the membrane. Functionally, may act as a bridging protein that binds pectin and other cell wall polysaccharides. Probably involved in maintaining esterification of pectins. May be involved in the specific O-acetylation of cell wall polymers. The polypeptide is Protein trichome birefringence-like 13 (TBL13) (Arabidopsis thaliana (Mouse-ear cress)).